The sequence spans 41 residues: Mu-conotoxin pn4c (41 aa).

A propeptide spanning residues 1–24 (DQPAERMQDDISSEHHPFFDPVKR) is cleaved from the precursor.

The protein belongs to the conotoxin M superfamily. Contains 3 disulfide bonds. They are not added, since framework IV presents two different connectivities (I-V, II-III, IV-VI and I-III, II-V, IV-VI). Expressed by the venom duct.

Its subcellular location is the secreted. In terms of biological role, mu-conotoxins block voltage-gated sodium channels (Nav). Blocks reversibly sodium channels in molluskan neurons, but has no effect on sodium currents in bovine chromaffin cells or in rat brain synaptosomes. Induces paralysis in mollusks (C.retripictus). This is Mu-conotoxin pn4c from Conus pennaceus (Feathered cone).